A 249-amino-acid chain; its full sequence is Adapter protein MecA (249 aa).

This sequence belongs to the MecA family. As to quaternary structure, homodimer.

Its function is as follows. Enables the recognition and targeting of unfolded and aggregated proteins to the ClpC protease or to other proteins involved in proteolysis. This is Adapter protein MecA from Streptococcus thermophilus (strain CNRZ 1066).